The sequence spans 641 residues: 1-deoxy-D-xylulose-5-phosphate synthase (641 aa).

Thiamine diphosphate contacts are provided by residues His79 and Ala120–Ser122. Asp151 contributes to the Mg(2+) binding site. Thiamine diphosphate contacts are provided by residues Gly152–Ser153, Asn180, Tyr290, and Glu372. Asn180 lines the Mg(2+) pocket.

Belongs to the transketolase family. DXPS subfamily. In terms of assembly, homodimer. The cofactor is Mg(2+). Requires thiamine diphosphate as cofactor.

The catalysed reaction is D-glyceraldehyde 3-phosphate + pyruvate + H(+) = 1-deoxy-D-xylulose 5-phosphate + CO2. The protein operates within metabolic intermediate biosynthesis; 1-deoxy-D-xylulose 5-phosphate biosynthesis; 1-deoxy-D-xylulose 5-phosphate from D-glyceraldehyde 3-phosphate and pyruvate: step 1/1. Catalyzes the acyloin condensation reaction between C atoms 2 and 3 of pyruvate and glyceraldehyde 3-phosphate to yield 1-deoxy-D-xylulose-5-phosphate (DXP). The chain is 1-deoxy-D-xylulose-5-phosphate synthase from Rhodopseudomonas palustris (strain BisB18).